The following is a 73-amino-acid chain: Translation initiation factor IF-1 (73 aa).

The 73-residue stretch at 1-73 folds into the S1-like domain; it reads MAKKDGVIEI…TRGRIVYRYK (73 aa).

The protein belongs to the IF-1 family. In terms of assembly, component of the 30S ribosomal translation pre-initiation complex which assembles on the 30S ribosome in the order IF-2 and IF-3, IF-1 and N-formylmethionyl-tRNA(fMet); mRNA recruitment can occur at any time during PIC assembly.

The protein resides in the cytoplasm. Its function is as follows. One of the essential components for the initiation of protein synthesis. Stabilizes the binding of IF-2 and IF-3 on the 30S subunit to which N-formylmethionyl-tRNA(fMet) subsequently binds. Helps modulate mRNA selection, yielding the 30S pre-initiation complex (PIC). Upon addition of the 50S ribosomal subunit IF-1, IF-2 and IF-3 are released leaving the mature 70S translation initiation complex. The sequence is that of Translation initiation factor IF-1 from Leifsonia xyli subsp. xyli (strain CTCB07).